Consider the following 317-residue polypeptide: Ribonuclease Z (317 aa).

Zn(2+) is bound by residues His62, His64, Asp66, His67, His139, Asp210, and His268. Asp66 (proton acceptor) is an active-site residue.

It belongs to the RNase Z family. As to quaternary structure, homodimer. Zn(2+) is required as a cofactor.

It carries out the reaction Endonucleolytic cleavage of RNA, removing extra 3' nucleotides from tRNA precursor, generating 3' termini of tRNAs. A 3'-hydroxy group is left at the tRNA terminus and a 5'-phosphoryl group is left at the trailer molecule.. Functionally, zinc phosphodiesterase, which displays some tRNA 3'-processing endonuclease activity. Probably involved in tRNA maturation, by removing a 3'-trailer from precursor tRNA. The chain is Ribonuclease Z from Picosynechococcus sp. (strain ATCC 27264 / PCC 7002 / PR-6) (Agmenellum quadruplicatum).